The chain runs to 459 residues: WPP domain-interacting protein 3 (459 aa).

Polar residues predominate over residues 1–17 (MNESVPDSVEDNGNSVP). The tract at residues 1–78 (MNESVPDSVE…GPVRDEAAPV (78 aa)) is disordered. Residues 52–66 (STRKGFGLKKWRRIK) show a composition bias toward basic residues. 2 short sequence motifs (nuclear localization signal) span residues 60–61 (KK) and 63–64 (RR). Positions 67 to 78 (RDGPVRDEAAPV) are enriched in basic and acidic residues. The Nuclear localization signal 3 motif lies at 86-87 (KR). Disordered stretches follow at residues 240-266 (KEEV…NNNH) and 308-330 (TDEL…TSSG). Basic and acidic residues predominate over residues 251–266 (NGNKEDDGESKKNNNH). Over residues 308-319 (TDELSSDQPSHQ) the composition is skewed to polar residues. Positions 331–375 (SKALILKEKVKLLEHKLEEARAALEAKEARIQELENSKIESELEC) form a coiled coil. A KASH domain is found at 426–459 (KLGFYILTQLILLVSILRFLVLQFSPASRLVIPT). The chain crosses the membrane as a helical span at residues 427 to 447 (LGFYILTQLILLVSILRFLVL).

Component of Ran complexes at least composed of WIT1 or WIT2, RANGAP1 or RANGAP2, and WIP1 or WIP2 or WIP3. Interacts with RANGAP1, WPP1/MAF1, and WPP2/MAF2. Interacts with SUN1 and SUN2. Core component of the LINC complex which is composed of inner nuclear membrane SUN domain-containing proteins coupled to outer nuclear membrane WIP and WIT proteins. The LINC complex also involves nucleoskeletal proteins CRWN/LINC and possibly KAKU4 and the cytoskeletal myosin KAKU1. Interacts with WIT2. As to expression, expressed in seedlings, roots, stems, leaves, and flowers.

The protein localises to the nucleus envelope. The protein resides in the nucleus membrane. In terms of biological role, mediates and enhances the nuclear envelope docking of RANGAP proteins mediated by WIT1 and WIT2 in the undifferentiated cells of root tips. As component of the SUN-WIP-WIT2-KAKU1 complex, mediates the transfer of cytoplasmic forces to the nuclear envelope (NE), leading to nuclear shape changes. The polypeptide is WPP domain-interacting protein 3 (WIP3) (Arabidopsis thaliana (Mouse-ear cress)).